A 182-amino-acid polypeptide reads, in one-letter code: Isopentenyl-diphosphate Delta-isomerase (182 aa).

Residues His-25 and His-32 each coordinate Mn(2+). Cys-67 is an active-site residue. His-69 provides a ligand contact to Mn(2+). Mg(2+) is bound at residue Glu-87. Mn(2+) contacts are provided by Glu-114 and Glu-116. The active site involves Glu-116.

It belongs to the IPP isomerase type 1 family. Homodimer. It depends on Mg(2+) as a cofactor. Requires Mn(2+) as cofactor.

The protein resides in the cytoplasm. The catalysed reaction is isopentenyl diphosphate = dimethylallyl diphosphate. The protein operates within isoprenoid biosynthesis; dimethylallyl diphosphate biosynthesis; dimethylallyl diphosphate from isopentenyl diphosphate: step 1/1. Catalyzes the 1,3-allylic rearrangement of the homoallylic substrate isopentenyl (IPP) to its highly electrophilic allylic isomer, dimethylallyl diphosphate (DMAPP). In Escherichia coli (strain K12 / MC4100 / BW2952), this protein is Isopentenyl-diphosphate Delta-isomerase.